The following is a 327-amino-acid chain: MVREKVKVSTRTLQWKCVESRRDSKRLYYGRFILSPLMKGQADTIGIAMRRALLGEIEGTCITRAKSENIPHDYSNIVGIQESVHEILMNLNEIVLRSNLYGTRNALICVQGPGYITAQDIILPPSVEIIDNTQHIATLMEPIDLCIGLKIERNRGYSLKMSNNFEDRSYPIDAVFMPVQNANHSIHSYGNGNEKQEILFLEIWTNGSLTPKEALHEASRNLINLFIPFLHVEEETFYLENNQHQVTLPLFPFHNRLVNLRKKKKELAFQYIFIDQLELPPRIYNCLKKSNIHTLLDLLNNSQEDLIKIEHFHIEDVKKILDILEKK.

Residues 1 to 233 (MVREKVKVST…NLFIPFLHVE (233 aa)) are alpha N-terminal domain (alpha-NTD). Positions 267–327 (LAFQYIFIDQ…KKILDILEKK (61 aa)) are alpha C-terminal domain (alpha-CTD).

This sequence belongs to the RNA polymerase alpha chain family. As to quaternary structure, in plastids the minimal PEP RNA polymerase catalytic core is composed of four subunits: alpha, beta, beta', and beta''. When a (nuclear-encoded) sigma factor is associated with the core the holoenzyme is formed, which can initiate transcription.

The protein resides in the plastid. Its subcellular location is the chloroplast. The enzyme catalyses RNA(n) + a ribonucleoside 5'-triphosphate = RNA(n+1) + diphosphate. Functionally, DNA-dependent RNA polymerase catalyzes the transcription of DNA into RNA using the four ribonucleoside triphosphates as substrates. The sequence is that of DNA-directed RNA polymerase subunit alpha from Lepidium virginicum (Virginia pepperweed).